A 563-amino-acid chain; its full sequence is Ataxin-10 homolog (563 aa).

Position 433 is a phosphothreonine (Thr433). Residues Val544–Asp563 are disordered. Ser559 is subject to Phosphoserine.

It belongs to the ataxin-10 family.

It is found in the cytoplasm. May play a role in the regulation of cytokinesis. The protein is Ataxin-10 homolog (CTR86) of Saccharomyces cerevisiae (strain ATCC 204508 / S288c) (Baker's yeast).